The sequence spans 163 residues: ECF RNA polymerase sigma factor SigM (163 aa).

The short motif at 30–43 (DLLQETFMRAYIHI) is the Polymerase core binding element. Positions 127–146 (YKEASHIMNISEANFKSVLF) form a DNA-binding region, H-T-H motif.

The protein belongs to the sigma-70 factor family. ECF subfamily. As to quaternary structure, interacts with the N-terminus of YhdL, which is probably its anti-sigma factor. Interacts transiently with the RNAP core.

Functionally, sigma factors are initiation factors that promote the attachment of RNA polymerase (RNAP) to specific initiation sites and are then released. Extracytoplasmic function (ECF) sigma factors are held in an inactive form by a cognate anti-sigma factor (YhdL) until released. This sigma factor is involved in the maintenance of membrane and cell wall integrity in response to environmental stresses including salt, acid, ethanol and antibiotics stress. Partially regulates transcription from a number of genes including disA. Associates with RNAP core under all growth phases. The chain is ECF RNA polymerase sigma factor SigM (sigM) from Bacillus subtilis (strain 168).